Consider the following 305-residue polypeptide: Shiftless antiviral inhibitor of ribosomal frameshifting protein homolog (305 aa).

The short motif at 141–157 is the Nuclear localization signal element; sequence RRVPQRKEVSRCQRCRK. The Nuclear export signal signature appears at 279–288; sequence NENDIDDIIL.

It belongs to the SHFL family.

The protein resides in the cytoplasm. It localises to the nucleus. It is found in the P-body. In terms of biological role, inhibits programmed -1 ribosomal frameshifting (-1PRF) of a variety of mRNAs from viruses and cellular genes. Interacts with the -1PRF signal of target mRNA and translating ribosomes and causes premature translation termination at the frameshifting site. May exhibit antiviral activity. This Xenopus laevis (African clawed frog) protein is Shiftless antiviral inhibitor of ribosomal frameshifting protein homolog (shfl).